The sequence spans 422 residues: UDP-N-acetylmuramoylalanine--D-glutamate ligase (422 aa).

Residue G102 to T108 coordinates ATP.

Belongs to the MurCDEF family.

It localises to the cytoplasm. The catalysed reaction is UDP-N-acetyl-alpha-D-muramoyl-L-alanine + D-glutamate + ATP = UDP-N-acetyl-alpha-D-muramoyl-L-alanyl-D-glutamate + ADP + phosphate + H(+). It functions in the pathway cell wall biogenesis; peptidoglycan biosynthesis. Its function is as follows. Cell wall formation. Catalyzes the addition of glutamate to the nucleotide precursor UDP-N-acetylmuramoyl-L-alanine (UMA). The chain is UDP-N-acetylmuramoylalanine--D-glutamate ligase from Helicobacter pylori (strain HPAG1).